Here is a 1577-residue protein sequence, read N- to C-terminus: Disco-interacting protein 2 homolog B-A (1577 aa).

A DMAP1-binding domain is found at 7–124 (DLAALPKEVR…PMPTKRRSAF (118 aa)). Disordered regions lie at residues 109–148 (EEKM…GSLR), 173–204 (VQGS…QGQT), 217–239 (DTNS…DRNS), and 253–273 (SRGQ…AHSR). Residues 124-140 (FVQSPAENCTPPDTSSA) are compositionally biased toward polar residues. Low complexity predominate over residues 176–187 (SSTSSSASSTLS). The span at 217-236 (DTNSSSGSVPPDVTSTAPQD) shows a compositional bias: polar residues.

The protein belongs to the DIP2 family.

The protein resides in the cell projection. The protein localises to the dendrite. It is found in the axon. Its subcellular location is the perikaryon. Its function is as follows. Negatively regulates axonal outgrowth and is essential for normal synaptic transmission. Not required for regulation of axon polarity. Promotes acetylation of alpha-tubulin. This chain is Disco-interacting protein 2 homolog B-A (dip2ba), found in Danio rerio (Zebrafish).